The primary structure comprises 1319 residues: DNA-directed RNA polymerase subunit beta' (1319 aa).

Zn(2+) is bound by residues Cys60, Cys62, Cys75, and Cys78. Residues Asp535, Asp537, and Asp539 each coordinate Mg(2+). Positions 890, 971, 978, and 981 each coordinate Zn(2+).

This sequence belongs to the RNA polymerase beta' chain family. As to quaternary structure, the RNAP catalytic core consists of 2 alpha, 1 beta, 1 beta' and 1 omega subunit. When a sigma factor is associated with the core the holoenzyme is formed, which can initiate transcription. It depends on Mg(2+) as a cofactor. Requires Zn(2+) as cofactor.

The enzyme catalyses RNA(n) + a ribonucleoside 5'-triphosphate = RNA(n+1) + diphosphate. DNA-dependent RNA polymerase catalyzes the transcription of DNA into RNA using the four ribonucleoside triphosphates as substrates. The polypeptide is DNA-directed RNA polymerase subunit beta' (Mycobacteroides abscessus (strain ATCC 19977 / DSM 44196 / CCUG 20993 / CIP 104536 / JCM 13569 / NCTC 13031 / TMC 1543 / L948) (Mycobacterium abscessus)).